A 219-amino-acid polypeptide reads, in one-letter code: tRNA (guanine-N(7)-)-methyltransferase (219 aa).

Glutamate 43, aspartate 68, glutamate 101, and asparagine 124 together coordinate S-adenosyl-L-methionine. Substrate is bound by residues lysine 128 and aspartate 160.

Belongs to the class I-like SAM-binding methyltransferase superfamily. TrmB family.

It catalyses the reaction guanosine(46) in tRNA + S-adenosyl-L-methionine = N(7)-methylguanosine(46) in tRNA + S-adenosyl-L-homocysteine. The protein operates within tRNA modification; N(7)-methylguanine-tRNA biosynthesis. Its function is as follows. Catalyzes the formation of N(7)-methylguanine at position 46 (m7G46) in tRNA. In Clostridium botulinum (strain Alaska E43 / Type E3), this protein is tRNA (guanine-N(7)-)-methyltransferase.